Reading from the N-terminus, the 439-residue chain is MTKFPRWLAMLVGLLFPLSALTQQQGLTIDIVGGNTAATPIAVLPMPYHDSAGAPATDVSGVVAADLNRSGQFRTLPLGQITERPTHGSEIRFPTWQALKQDYIVVGRVLDARQGTYRVEYELFDVRNGKRMLGLAMTARASAMRDVAHQMADAIYEKITGLRGAFFTRIAYVTASGSHGAMRYALMVADSDGYNPQTIVRSAEPLLSPDWSSDGKKLAYVSFEKGGSSIYIQDIATGSRELVSSFRGINAAPSFAPDGHRIALSLSRSGNPEIYVMDLVSKQLIQLTNSFGIDTEPVWSSDGKFIYFTSDRGGRPQIYKVASVGGAATRVTFQGNYNASASVSYDDKKIVVAQGSGNVYRIAMMDQSSGSTVWNTLSTGSLDESPSFAPNASMVLYAAREGGRGVLYAVSADARVRQRLVSVDSDVREPAWGPYRSVH.

The N-terminal stretch at 1–22 (MTKFPRWLAMLVGLLFPLSALT) is a signal peptide.

It belongs to the TolB family. In terms of assembly, the Tol-Pal system is composed of five core proteins: the inner membrane proteins TolA, TolQ and TolR, the periplasmic protein TolB and the outer membrane protein Pal. They form a network linking the inner and outer membranes and the peptidoglycan layer.

The protein resides in the periplasm. Part of the Tol-Pal system, which plays a role in outer membrane invagination during cell division and is important for maintaining outer membrane integrity. The chain is Tol-Pal system protein TolB from Xylella fastidiosa (strain Temecula1 / ATCC 700964).